The primary structure comprises 273 residues: 2-dehydro-3-deoxyphosphooctonate aldolase (273 aa).

Belongs to the KdsA family.

The protein localises to the cytoplasm. The enzyme catalyses D-arabinose 5-phosphate + phosphoenolpyruvate + H2O = 3-deoxy-alpha-D-manno-2-octulosonate-8-phosphate + phosphate. The protein operates within carbohydrate biosynthesis; 3-deoxy-D-manno-octulosonate biosynthesis; 3-deoxy-D-manno-octulosonate from D-ribulose 5-phosphate: step 2/3. It functions in the pathway bacterial outer membrane biogenesis; lipopolysaccharide biosynthesis. This chain is 2-dehydro-3-deoxyphosphooctonate aldolase, found in Cyanothece sp. (strain PCC 7425 / ATCC 29141).